Consider the following 393-residue polypeptide: Pre-mRNA splicing factor SR-like 1 (393 aa).

The interval 173-393 (MNLPTKPSGS…VIKLGGSSWR (221 aa)) is disordered. Residues 249–312 (QSRDYYSDRD…RNDYEDDRSR (64 aa)) show a composition bias toward basic and acidic residues. The Nuclear localization signal signature appears at 301–308 (SRRNDYED). A compositionally biased stretch (basic residues) spans 313–325 (HDRRSRSRSRSRS). Basic and acidic residues-rich tracts occupy residues 329 to 346 (QIEREPTPKRDSSNKEKS) and 356 to 385 (KLKDLYGDASSQKRDEGFGTRKDSSSEEVI).

Belongs to the PRP38 family. Post-translationally, phosphorylated. As to expression, mostly expressed in siliques and leaves, also present in seedlings, flowers and stems, and, at low levels, in roots.

It is found in the nucleus. Functionally, may be required for pre-mRNA splicing. Confers salt tolerance to LiCl and NaCl. This Arabidopsis thaliana (Mouse-ear cress) protein is Pre-mRNA splicing factor SR-like 1.